The primary structure comprises 202 residues: Glycerol-3-phosphate acyltransferase (202 aa).

The next 4 helical transmembrane spans lie at 2-22, 82-102, 119-139, and 158-178; these read ANLL…AVVV, DTGL…PVFH, AIDP…AFFF, and VLMN…VLLI.

Belongs to the PlsY family. In terms of assembly, probably interacts with PlsX.

The protein localises to the cell inner membrane. It catalyses the reaction an acyl phosphate + sn-glycerol 3-phosphate = a 1-acyl-sn-glycero-3-phosphate + phosphate. Its pathway is lipid metabolism; phospholipid metabolism. Catalyzes the transfer of an acyl group from acyl-phosphate (acyl-PO(4)) to glycerol-3-phosphate (G3P) to form lysophosphatidic acid (LPA). This enzyme utilizes acyl-phosphate as fatty acyl donor, but not acyl-CoA or acyl-ACP. This is Glycerol-3-phosphate acyltransferase from Cupriavidus taiwanensis (strain DSM 17343 / BCRC 17206 / CCUG 44338 / CIP 107171 / LMG 19424 / R1) (Ralstonia taiwanensis (strain LMG 19424)).